A 242-amino-acid chain; its full sequence is NADPH-dependent pterin aldehyde reductase (242 aa).

Thr-2 bears the N-acetylthreonine mark. 21-50 provides a ligand contact to NADP(+); it reads LITGVSKGLGRALALELAKRGHTVIGCARS. Ser-153 contacts substrate. Tyr-166 serves as the catalytic Proton acceptor. Lys-170 contacts NADP(+).

It belongs to the short-chain dehydrogenases/reductases (SDR) family. Homodimer. As to expression, mostly expressed in seeds, and, to a lower extent, in roots, leaves, flowers and siliques.

It localises to the cytoplasm. NADPH-dependent pterin aldehyde reductase involved in pterin aldehyde salvage during folate turnover. Catalyzes the reduction of diverse aromatic and aliphatic aldehydes (e.g. acetaldehyde, n-propanal, 1-naphthaldehyde, benzaldehyde, cinnamaldehyde, n-butanal, n-hexanal, n-pentanal, 2-naphthaldehyde, n-octanal, n-nonanal and n-heptanal), in addition to the conversion of pterin-6-aldehyde (PtCHO) to 6-hydroxymethylpterin (PtCH(2)OH), and the conversion of dihydropterin-6-aldehyde (H(2)PtCHO) to 6-hydroxymethyldihydropterin (H(2)PtCH(2)OH). Cannot reduce the pterin ring. The polypeptide is NADPH-dependent pterin aldehyde reductase (Arabidopsis thaliana (Mouse-ear cress)).